The chain runs to 284 residues: L-ribulose-5-phosphate 3-epimerase UlaE (284 aa).

This sequence belongs to the L-ribulose-5-phosphate 3-epimerase family.

It carries out the reaction L-ribulose 5-phosphate = L-xylulose 5-phosphate. The protein operates within cofactor degradation; L-ascorbate degradation; D-xylulose 5-phosphate from L-ascorbate: step 3/4. In terms of biological role, catalyzes the isomerization of L-xylulose-5-phosphate to L-ribulose-5-phosphate. Is involved in the anaerobic L-ascorbate utilization. The chain is L-ribulose-5-phosphate 3-epimerase UlaE from Escherichia coli O127:H6 (strain E2348/69 / EPEC).